We begin with the raw amino-acid sequence, 308 residues long: Mycothiol acetyltransferase (308 aa).

N-acetyltransferase domains follow at residues 12–149 (DVLD…RPLG) and 165–308 (VTVR…RTET). Glu-43 lines the 1D-myo-inositol 2-(L-cysteinylamino)-2-deoxy-alpha-D-glucopyranoside pocket. 88 to 90 (LVV) lines the acetyl-CoA pocket. Residues Glu-192, Lys-231, and Glu-240 each contribute to the 1D-myo-inositol 2-(L-cysteinylamino)-2-deoxy-alpha-D-glucopyranoside site. Acetyl-CoA is bound by residues 244–246 (VGV) and 251–257 (QGGGLGR). Residue Tyr-278 participates in 1D-myo-inositol 2-(L-cysteinylamino)-2-deoxy-alpha-D-glucopyranoside binding.

This sequence belongs to the acetyltransferase family. MshD subfamily. In terms of assembly, monomer.

It catalyses the reaction 1D-myo-inositol 2-(L-cysteinylamino)-2-deoxy-alpha-D-glucopyranoside + acetyl-CoA = mycothiol + CoA + H(+). In terms of biological role, catalyzes the transfer of acetyl from acetyl-CoA to desacetylmycothiol (Cys-GlcN-Ins) to form mycothiol. The protein is Mycothiol acetyltransferase of Streptomyces bingchenggensis (strain BCW-1).